Consider the following 399-residue polypeptide: Zinc metalloproteinase nas-25 (399 aa).

The N-terminal stretch at 1–20 (MQIYLGITICLVAFLTVIDC) is a signal peptide. Positions 41–237 (QVQRDLTYRW…DQINQYYQCY (197 aa)) constitute a Peptidase M12A domain. Asparagine 52 and asparagine 61 each carry an N-linked (GlcNAc...) asparagine glycan. Intrachain disulfides connect cysteine 82–cysteine 236, cysteine 106–cysteine 126, cysteine 240–cysteine 260, and cysteine 265–cysteine 274. A Zn(2+)-binding site is contributed by histidine 134. Glutamate 135 is an active-site residue. The Zn(2+) site is built by histidine 138 and histidine 144. The 44-residue stretch at 232-275 (QYYQCYDSCRNAGQLANCANGGIPNPNNCQVCNCPMGYGGDLCD) folds into the EGF-like domain. The N-linked (GlcNAc...) asparagine glycan is linked to asparagine 371.

Zn(2+) is required as a cofactor. As to expression, expressed in pharyngeal muscles, pharyngeal-intestinal valve, rectal gland cells and arcade cells.

Its subcellular location is the secreted. In terms of biological role, metalloprotease. This is Zinc metalloproteinase nas-25 (nas-25) from Caenorhabditis elegans.